The following is a 102-amino-acid chain: Small ribosomal subunit protein uS10 (102 aa).

The interval 35 to 58 (SGPIPLPTKTLEIPSRKSPDGEGT) is disordered.

Belongs to the universal ribosomal protein uS10 family. Part of the 30S ribosomal subunit.

Its function is as follows. Involved in the binding of tRNA to the ribosomes. The protein is Small ribosomal subunit protein uS10 of Halorubrum lacusprofundi (strain ATCC 49239 / DSM 5036 / JCM 8891 / ACAM 34).